We begin with the raw amino-acid sequence, 661 residues long: Methyl-accepting chemotaxis protein McpA (661 aa).

Topologically, residues 1-16 (MKKILQLIKQRSITRK) are cytoplasmic. Residues 17 to 37 (LLVSFLSILIIPVVILAIFAY) form a helical membrane-spanning segment. The Extracellular portion of the chain corresponds to 38–281 (QSASSSLDRQ…IHEAAQPVLH (244 aa)). Residues 152 to 228 (ITDPYKTAST…QSGTELKGDW (77 aa)) enclose the Cache domain. A helical membrane pass occupies residues 282-302 (LALIVLAAAIIIGIIVMTLII). Residues 303–355 (RSITTPLKQLVGSSKRISEGDLTETIDIRSKDELGELGKSFNNMASSLRSLIH) enclose the HAMP domain. At 303-661 (RSITTPLKQL…RDMTKRFKIE (359 aa)) the chain is on the cytoplasmic side. Glu370 carries the post-translational modification Glutamate methyl ester (Glu). In terms of domain architecture, Methyl-accepting transducer spans 374 to 610 (SAAQTSKATE…EVSGASEHIA (237 aa)). Gln593 and Gln594 each carry deamidated glutamine. The residue at position 594 (Gln594) is a Glutamate methyl ester (Gln). 2 positions are modified to glutamate methyl ester (Glu): Glu629 and Glu636.

It belongs to the methyl-accepting chemotaxis (MCP) protein family. Interacts with FloT. Deamidated by CheD on Gln-593 and Gln-594, producing glutamate residues. The glutamate residues are then methylated. Other additional sites are deamidated and methylated as well.

It is found in the cell membrane. The protein resides in the membrane raft. Chemotactic-signal transducers respond to changes in the concentration of attractants and repellents in the environment, transduce a signal from the outside to the inside of the cell, and facilitate sensory adaptation through the variation of the level of methylation. All amino acids serve as attractants in B.subtilis, they appear to cause an increase in the turnover methyl groups, leading to methylation of an unidentified acceptor, while repellents have been shown to cause a decrease in methyl group turnover. The methyl groups are added by a methyltransferase and removed by a methylesterase. McpA is required for taxis towards glucose and alpha-methylglucoside. The sequence is that of Methyl-accepting chemotaxis protein McpA (mcpA) from Bacillus subtilis (strain 168).